Here is a 569-residue protein sequence, read N- to C-terminus: Cryptochrome DASH, chloroplastic/mitochondrial (569 aa).

Residues 84 to 221 enclose the Photolyase/cryptochrome alpha/beta domain; it reads GVTILWFRND…KLELIWGSTM (138 aa). FAD-binding positions include Tyr316 and 329–333; that span reads STKFS. ATP is bound at residue Arg436. FAD is bound by residues Asp466 and Asp468. Asp485 contacts ATP. The interval 541-569 is disordered; sequence GNGPMAGGSKSGGGFRGSHSGRRSRHNGP. The segment covering 544 to 556 has biased composition (gly residues); sequence PMAGGSKSGGGFR. Residues 559–569 show a composition bias toward basic residues; it reads HSGRRSRHNGP.

The protein belongs to the DNA photolyase class-1 family. As to quaternary structure, homodimer. The cofactor is FAD. (6R)-5,10-methylene-5,6,7,8-tetrahydrofolate serves as cofactor.

The protein localises to the plastid. Its subcellular location is the chloroplast. It localises to the mitochondrion. In terms of biological role, may have a photoreceptor function. Binds ss- and ds-DNA in a sequence non-specific manner. Has a photolyase activity specific for cyclobutane pyrimidine dimers in ssDNA. This Arabidopsis thaliana (Mouse-ear cress) protein is Cryptochrome DASH, chloroplastic/mitochondrial (CRYD).